The chain runs to 101 residues: Large ribosomal subunit protein uL24 (101 aa).

It belongs to the universal ribosomal protein uL24 family. As to quaternary structure, part of the 50S ribosomal subunit.

Functionally, one of two assembly initiator proteins, it binds directly to the 5'-end of the 23S rRNA, where it nucleates assembly of the 50S subunit. Its function is as follows. One of the proteins that surrounds the polypeptide exit tunnel on the outside of the subunit. The protein is Large ribosomal subunit protein uL24 of Borrelia turicatae (strain 91E135).